Consider the following 539-residue polypeptide: Alpha-aminoadipic semialdehyde dehydrogenase (539 aa).

The transit peptide at 1 to 26 (MWRVPRRLCVQSVKTSKLSGPWSRPA) directs the protein to the mitochondrion. 3 positions are modified to N6-acetyllysine; alternate: lysine 86, lysine 94, and lysine 97. 3 positions are modified to N6-succinyllysine; alternate: lysine 86, lysine 94, and lysine 97. Residues 192–194 (TAF), lysine 218, 258–259 (GT), 274–275 (GS), 274–279 (GSTQVG), and 296–297 (EL) each bind NAD(+). The Proton acceptor role is filled by glutamate 296. The active-site Nucleophile is the cysteine 330. Threonine 331 is a binding site for (S)-2-amino-6-oxohexanoate. Glutamate 427 provides a ligand contact to NAD(+). At lysine 462 the chain carries N6-acetyllysine. Positions 489 and 490 each coordinate (S)-2-amino-6-oxohexanoate. Lysine 500 carries the post-translational modification N6-acetyllysine. An N6-succinyllysine modification is found at lysine 537.

Belongs to the aldehyde dehydrogenase family. In terms of assembly, homotetramer. As to expression, present in liver, kidney, brain and pancreas, and at lower levels in jejunum, duodenum, stomach and testes (at protein level).

The protein localises to the cytoplasm. Its subcellular location is the cytosol. The protein resides in the nucleus. It is found in the mitochondrion. It carries out the reaction nonanal + NAD(+) + H2O = nonanoate + NADH + 2 H(+). The enzyme catalyses (S)-2-amino-6-oxohexanoate + NAD(+) + H2O = L-2-aminoadipate + NADH + 2 H(+). The catalysed reaction is betaine aldehyde + NAD(+) + H2O = glycine betaine + NADH + 2 H(+). It catalyses the reaction an aldehyde + NAD(+) + H2O = a carboxylate + NADH + 2 H(+). It carries out the reaction hexanal + NAD(+) + H2O = hexanoate + NADH + 2 H(+). The enzyme catalyses octanal + NAD(+) + H2O = octanoate + NADH + 2 H(+). The catalysed reaction is (E)-non-2-enal + NAD(+) + H2O = (E)-non-2-enoate + NADH + 2 H(+). It catalyses the reaction (E)-4-hydroxynon-2-enal + NAD(+) + H2O = (E)-4-hydroxynon-2-enoate + NADH + 2 H(+). The protein operates within amine and polyamine biosynthesis; betaine biosynthesis via choline pathway; betaine from betaine aldehyde: step 1/1. Its function is as follows. Multifunctional enzyme mediating important protective effects. Metabolizes betaine aldehyde to betaine, an important cellular osmolyte and methyl donor. Protects cells from oxidative stress by metabolizing a number of lipid peroxidation-derived aldehydes. Involved in lysine catabolism. This is Alpha-aminoadipic semialdehyde dehydrogenase from Mus musculus (Mouse).